The chain runs to 208 residues: MVSGRIETLLAQLRLQGIDDERLLKAIGDVPRERFIDEAFEHKAWENTALPIGCGQTISQPYMVAKMTSLLALTPTSRVLEIGTGSGYQTAILAHLVGHVCSVERIKGLQWQAKRRLKQLDLHNVSTRHGDGWLGWPARGPYDAIIVTAAPPNIPDALMSQLDDGGVMVLPVGEDQQVLQRIRRTADEFIVDTIEPVRFVPLVKGDLA.

Serine 59 is a catalytic residue.

It belongs to the methyltransferase superfamily. L-isoaspartyl/D-aspartyl protein methyltransferase family.

It is found in the cytoplasm. It carries out the reaction [protein]-L-isoaspartate + S-adenosyl-L-methionine = [protein]-L-isoaspartate alpha-methyl ester + S-adenosyl-L-homocysteine. In terms of biological role, catalyzes the methyl esterification of L-isoaspartyl residues in peptides and proteins that result from spontaneous decomposition of normal L-aspartyl and L-asparaginyl residues. It plays a role in the repair and/or degradation of damaged proteins. The chain is Protein-L-isoaspartate O-methyltransferase from Erwinia tasmaniensis (strain DSM 17950 / CFBP 7177 / CIP 109463 / NCPPB 4357 / Et1/99).